The following is a 712-amino-acid chain: TGF-beta-activated kinase 1 and MAP3K7-binding protein 3 (712 aa).

An N-acetylalanine modification is found at Ala2. The region spanning 8 to 51 is the CUE domain; sequence LDIQVLHDLRQRFPEIPEGVVSQCMLQNNNNLEACCRALSQESS. A phosphoserine mark is found at Ser60, Ser101, and Ser103. Disordered regions lie at residues 141 to 189, 227 to 345, 369 to 447, and 475 to 509; these read FMNE…HIPR, PGSI…KQGS, TVEP…SPRV, and ERSAAPEPIQPISVIPGSGGEKGSHKYQRSSSSGS. Polar residues predominate over residues 163-173; sequence MQTGMNPSAMQ. Low complexity-rich tracts occupy residues 233 to 249 and 269 to 290; these read RQTSQSSSGRQTPQSTP and YPHQQNYQPSQYSPKQQQIPQS. Over residues 322–332 the composition is skewed to pro residues; it reads PPSPSTTPPHP. Composition is skewed to polar residues over residues 336–345 and 371–404; these read GPPSYQKQGS and EPSQRPGTAINRSPSPISNQPSPRNQHSLYTATT. At Ser385 the chain carries Phosphoserine. Position 404 is a phosphothreonine (Thr404). Low complexity predominate over residues 405–417; the sequence is PPSSSPSRGISSQ. A phosphoserine mark is found at Ser409 and Ser492. Ser506 is modified (phosphoserine; by MAPKAPK2 and MAPKAPK3). Residues 517 to 559 are a coiled coil; sequence ALLLHQRARMERLAKQLKLEKEELERLKSEVNGMEHDLMQRRL. The tract at residues 609–636 is disordered; it reads MNNFYDNIEPGPVVPPKPSKKDSSDPCT. A compositionally biased stretch (basic and acidic residues) spans 627-636; sequence SKKDSSDPCT. Residue Lys649 forms a Glycyl lysine isopeptide (Lys-Gly) (interchain with G-Cter in ubiquitin) linkage. The span at 658–667 shows a compositional bias: basic and acidic residues; that stretch reads QAAAADEHRT. The segment at 658–682 is disordered; that stretch reads QAAAADEHRTGSTQSPRTQPRDEDY. The RanBP2-type zinc-finger motif lies at 682–712; that stretch reads YEGAPWNCDSCTFLNHPALNRCEQCEMPRYT. Cys692 is subject to (Microbial infection) S-methylcysteine.

Interacts with TAB1, TAB2, MAP3K7, TRAF2 and TRAF6. The minimal TAB3-containing complex (TAB1-MAP3K7-TAB3) appears not to contain TAB2. However, it seems sensible to consider that TAB2 may also join this complex and may act in a cooperative manner with TAB3. Interacts with DYNC2I2 (via the WD domains). Interacts with RBCK1. Binds 'Lys-63'-linked polyubiquitin chains. Interacts with TRIM5. Interacts with TRIM38 (via B30.2/SPRY domain), leading to its translocation to lysosomes and degradation. Interacts with ASB1. In terms of assembly, (Microbial infection) Interacts with M.tuberculosis PtpA, which blocks the NF-kappa-B signaling pathway. Post-translationally, ubiquitinated; following IL1 stimulation or TRAF6 overexpression. Ubiquitinated by AMFR via 'Lys-27'-linked polyubiquitination; leading to TAK1/MAP3K7 activation. Degraded in a lysosome-dependent manner following interaction with TRIM38. In terms of processing, phosphorylated at Ser-506 by MAPKAPK2 and MAPKAPK3 following IL1 treatment. Post-translationally, (Microbial infection) Methylated at Cys-692 by enteropathogenic E.coli protein NleE or S.flexneri protein OspZ: methylation disrupts zinc-binding and ability to bind 'Lys-63'-linked ubiquitin, leading to NF-kappa-B inactivation. In terms of tissue distribution, widely expressed. Constitutively overexpressed in certain tumor tissues. Major transcript. As to expression, minor transcript.

Adapter required to activate the JNK and NF-kappa-B signaling pathways through the specific recognition of 'Lys-63'-linked polyubiquitin chains by its RanBP2-type zinc finger (NZF). Acts as an adapter linking MAP3K7/TAK1 and TRAF6 to 'Lys-63'-linked polyubiquitin chains. The RanBP2-type zinc finger (NZF) specifically recognizes Lys-63'-linked polyubiquitin chains unanchored or anchored to the substrate proteins such as RIPK1/RIP1 and RIPK2: this acts as a scaffold to organize a large signaling complex to promote autophosphorylation of MAP3K7/TAK1, and subsequent activation of I-kappa-B-kinase (IKK) core complex by MAP3K7/TAK1. Its function is as follows. May be an oncogenic factor. This chain is TGF-beta-activated kinase 1 and MAP3K7-binding protein 3, found in Homo sapiens (Human).